We begin with the raw amino-acid sequence, 317 residues long: Transaldolase (317 aa).

The active-site Schiff-base intermediate with substrate is K132.

It belongs to the transaldolase family. Type 1 subfamily. In terms of assembly, homodimer.

The protein localises to the cytoplasm. It catalyses the reaction D-sedoheptulose 7-phosphate + D-glyceraldehyde 3-phosphate = D-erythrose 4-phosphate + beta-D-fructose 6-phosphate. Its pathway is carbohydrate degradation; pentose phosphate pathway; D-glyceraldehyde 3-phosphate and beta-D-fructose 6-phosphate from D-ribose 5-phosphate and D-xylulose 5-phosphate (non-oxidative stage): step 2/3. Its function is as follows. Transaldolase is important for the balance of metabolites in the pentose-phosphate pathway. This Histophilus somni (strain 129Pt) (Haemophilus somnus) protein is Transaldolase.